A 501-amino-acid chain; its full sequence is Suppressor of hairless protein homolog (501 aa).

DNA-binding stretches follow at residues 58–68, 166–171, and 193–198; these read QKSYGNEKRFF, SKPSKK, and RLRSQT. An IPT/TIG domain is found at 356–446; sequence PVVESLQLNG…YSTSLTFTYT (91 aa).

The protein belongs to the Su(H) family. As to quaternary structure, interacts with activated Notch proteins. Forms a ternary complex with nrarp and the intracellular domain (NICD) of notch1. Interacts with rita1, leading to nuclear export, prevent the interaction between rbpj and NICD product and subsequent down-regulation of the Notch signaling pathway.

Its subcellular location is the nucleus. The protein resides in the cytoplasm. Transcriptional regulator that plays a central role in Notch signaling, a signaling pathway involved in cell-cell communication that regulates a broad spectrum of cell-fate determinations. Acts as a transcriptional repressor when it is not associated with Notch proteins. When associated with some NICD product of Notch proteins (Notch intracellular domain), it acts as a transcriptional activator that activates transcription of Notch target genes. Required for the transcriptional activation of ESR1, suggesting that it is required during primary neurogenesis in embryos. Binds to the oxygen responsive element of COX4I2 and activates its transcription under hypoxia conditions (4% oxygen). The protein is Suppressor of hairless protein homolog (rbpj) of Xenopus laevis (African clawed frog).